Here is a 246-residue protein sequence, read N- to C-terminus: Bromelain inhibitor (246 aa).

An N-terminal signal peptide occupies residues methionine 1–leucine 19. Disulfide bonds link cysteine 22/cysteine 42, cysteine 25/cysteine 74, cysteine 27/cysteine 40, cysteine 49/cysteine 56, and cysteine 53/cysteine 65. Positions threonine 31–aspartate 35 are excised as a propeptide. Propeptides lie at residues proline 77–leucine 95 and threonine 107–aspartate 111. Cystine bridges form between cysteine 98–cysteine 118, cysteine 101–cysteine 150, cysteine 103–cysteine 116, cysteine 125–cysteine 132, and cysteine 129–cysteine 141. 2 consecutive propeptides follow at residues proline 153–leucine 171 and threonine 183–aspartate 187. 5 cysteine pairs are disulfide-bonded: cysteine 174-cysteine 194, cysteine 177-cysteine 226, cysteine 179-cysteine 192, cysteine 201-cysteine 208, and cysteine 205-cysteine 217. A propeptide spanning residues proline 229–glutamate 246 is cleaved from the precursor.

Belongs to the protease inhibitor I67 family. In terms of assembly, each inhibitor is composed of two chains, designated A and B linked by three disulfide bonds.

In terms of biological role, weak inhibitor of cysteine proteinases. This chain is Bromelain inhibitor, found in Ananas comosus (Pineapple).